We begin with the raw amino-acid sequence, 395 residues long: Probable eukaryotic translation initiation factor 5 (395 aa).

28–35 (GKGNGIKT) contacts GTP. Disordered stretches follow at residues 146–171 (PPAK…AEDE) and 374–395 (LAEA…DDDE). The span at 147-157 (PAKKKSHKHKR) shows a compositional bias: basic residues. Composition is skewed to acidic residues over residues 161–170 (VAEEEDGAED) and 377–395 (ASDE…DDDE). The 157-residue stretch at 228-384 (EEAESSRYDQ…AEASDESESE (157 aa)) folds into the W2 domain.

This sequence belongs to the eIF-2-beta/eIF-5 family. In terms of assembly, monomer.

In terms of biological role, catalyzes the hydrolysis of GTP bound to the 40S ribosomal initiation complex (40S.mRNA.Met-tRNA[F].eIF-2.GTP) with the subsequent joining of a 60S ribosomal subunit resulting in the release of eIF-2 and the guanine nucleotide. The subsequent joining of a 60S ribosomal subunit results in the formation of a functional 80S initiation complex (80S.mRNA.Met-tRNA[F]). This chain is Probable eukaryotic translation initiation factor 5 (tif5), found in Schizosaccharomyces pombe (strain 972 / ATCC 24843) (Fission yeast).